The sequence spans 43 residues: Protein PsbN (43 aa).

Residues 4–24 form a helical membrane-spanning segment; sequence AIVLIISVGAALVAVTGYGIY.

Belongs to the PsbN family.

Its subcellular location is the cellular thylakoid membrane. May play a role in photosystem I and II biogenesis. The protein is Protein PsbN of Trichormus variabilis (strain ATCC 29413 / PCC 7937) (Anabaena variabilis).